The sequence spans 378 residues: Forkhead box protein F1 (378 aa).

The disordered stretch occupies residues 1 to 45 (MSAPDKQQPPHGGGTGGGGGAGGQAMDPAAAGPTKAKKTNAGVRR). Over residues 11–23 (HGGGTGGGGGAGG) the composition is skewed to gly residues. A compositionally biased stretch (low complexity) spans 24–42 (QAMDPAAAGPTKAKKTNAG). Residues 47–138 (EKPPYSYIAL…EFMFEEGSFR (92 aa)) constitute a DNA-binding region (fork-head).

In terms of tissue distribution, expressed primarily in lung in alveolar type II pneumocyte cells, and to a lesser extent in placenta, stomach, intestine and colon.

It localises to the nucleus. Probable transcription activator for a number of lung-specific genes. In Mus musculus (Mouse), this protein is Forkhead box protein F1 (Foxf1).